The primary structure comprises 159 residues: MSYNINTPSQFVFLSSAWADPIELINLCTNALGNQFQTQQARTVVQRQFSEVWKPSPQVTVRFPDSDFKVYRFNAVLDPLVTALLGAFDTRNRIIEVENQANPSTAETLDATRRVDDATVAIRSAINNLIVELTRGTGSYNRSSFESSSGLVWTSSPAT.

S2 carries the post-translational modification N-acetylserine; by host.

The protein belongs to the virgaviridae capsid protein family.

It is found in the virion. Functionally, capsid protein self-assembles to form rod-shaped virions about 18 nm in diameter with a central canal enclosing the viral genomic RNA. The polypeptide is Capsid protein (CP) (Tobacco mosaic virus (strain Rakkyo) (TMV-R)).